The sequence spans 757 residues: Endonuclease MutS2 (757 aa).

Residue 321 to 328 (GPNMGGKT) participates in ATP binding. Residues 681–756 (IDIRGMTVEE…GTGVTVVEVK (76 aa)) form the Smr domain.

The protein belongs to the DNA mismatch repair MutS family. MutS2 subfamily. As to quaternary structure, homodimer. Binds to stalled ribosomes, contacting rRNA.

Functionally, endonuclease that is involved in the suppression of homologous recombination and thus may have a key role in the control of bacterial genetic diversity. Its function is as follows. Acts as a ribosome collision sensor, splitting the ribosome into its 2 subunits. Detects stalled/collided 70S ribosomes which it binds and splits by an ATP-hydrolysis driven conformational change. Acts upstream of the ribosome quality control system (RQC), a ribosome-associated complex that mediates the extraction of incompletely synthesized nascent chains from stalled ribosomes and their subsequent degradation. Probably generates substrates for RQC. This Thermotoga sp. (strain RQ2) protein is Endonuclease MutS2.